Consider the following 424-residue polypeptide: MKKVIITPSKLRGSVKIPPSKSMAHRAIICASLSKGESVISNIDFSEDIIATMEGMKSLGANIKVEKDKLIINGENILKDSNYKVIDCNESGSTLRFLVPISLIKDNKVNFIGRGNLGKRPLKTYYEIFEEQEIKYSYEEENLDLNIEGSLKGGEFKVKGNISSQFISGLLFTLPLLKDDSKIIITTELESKGYIDLTLDMIEKFGVTIKNNNYREFLIKGNQSYKPMNYKVEGDYSQAAFYFSAGALGSEINCLDLDLSSYQGDKECIEILEGMGARLIKNQEESLSIIHGDLNGTIIDASQCPDIIPVLTVVAALSKGETSIINGERLRIKECDRLNAICTELNKLGADIKELKDGLIINGVKELIGGEVYSHKDHRIAMSLAIASTRCKEEVIIREPDCVKKSYPGFWEDFKSLSGILREE.

3-phosphoshikimate contacts are provided by lysine 21, serine 22, and arginine 26. Residue lysine 21 coordinates phosphoenolpyruvate. The phosphoenolpyruvate site is built by glycine 92 and arginine 120. Residues serine 163, serine 164, glutamine 165, serine 191, aspartate 306, and lysine 333 each contribute to the 3-phosphoshikimate site. Glutamine 165 lines the phosphoenolpyruvate pocket. The active-site Proton acceptor is the aspartate 306. Positions 337, 379, and 405 each coordinate phosphoenolpyruvate.

It belongs to the EPSP synthase family. Monomer.

The protein resides in the cytoplasm. The catalysed reaction is 3-phosphoshikimate + phosphoenolpyruvate = 5-O-(1-carboxyvinyl)-3-phosphoshikimate + phosphate. Its pathway is metabolic intermediate biosynthesis; chorismate biosynthesis; chorismate from D-erythrose 4-phosphate and phosphoenolpyruvate: step 6/7. Catalyzes the transfer of the enolpyruvyl moiety of phosphoenolpyruvate (PEP) to the 5-hydroxyl of shikimate-3-phosphate (S3P) to produce enolpyruvyl shikimate-3-phosphate and inorganic phosphate. This Clostridium perfringens (strain SM101 / Type A) protein is 3-phosphoshikimate 1-carboxyvinyltransferase.